We begin with the raw amino-acid sequence, 321 residues long: MVMGVSLSPALGRWFRHAIPFAILTLLLLYISIWFFYEWPFPLPAQRTQQSGLRGLKLPSPSPVLGSLLSFPAGVQSCNPERPLPSQTGPAARPLVVPEKEELPCLGPHGALGRMVSPFLACMSPEGDVALSQYLAGWRELLRFLTPLGTVFAFATSEAFNKVTDLEARVHGPNASHYTSLMTMITWERGAGLLQRPGTEPGHSAGSSGSRTLLLLHRALRWSQLCLHRVATGTLGGPDAGTQCGEAYSTALAPHHPWLIRQAARLAILALPSRGRLLQLACPGTGEADARVALARAAGVLEDVYNRTQGLLAGHGLLQLA.

Belongs to the GLTP family.

The protein is Glycolipid transfer protein domain-containing protein 2 (Gltpd2) of Mus musculus (Mouse).